The following is a 431-amino-acid chain: Enolase (431 aa).

Glutamine 167 contacts (2R)-2-phosphoglycerate. Glutamate 209 functions as the Proton donor in the catalytic mechanism. Mg(2+) is bound by residues aspartate 246, glutamate 289, and aspartate 316. (2R)-2-phosphoglycerate contacts are provided by lysine 341, arginine 370, serine 371, and lysine 392. The active-site Proton acceptor is lysine 341.

The protein belongs to the enolase family. Component of the RNA degradosome, a multiprotein complex involved in RNA processing and mRNA degradation. Requires Mg(2+) as cofactor.

Its subcellular location is the cytoplasm. The protein resides in the secreted. It localises to the cell surface. It carries out the reaction (2R)-2-phosphoglycerate = phosphoenolpyruvate + H2O. Its pathway is carbohydrate degradation; glycolysis; pyruvate from D-glyceraldehyde 3-phosphate: step 4/5. In terms of biological role, catalyzes the reversible conversion of 2-phosphoglycerate (2-PG) into phosphoenolpyruvate (PEP). It is essential for the degradation of carbohydrates via glycolysis. This is Enolase from Chromohalobacter salexigens (strain ATCC BAA-138 / DSM 3043 / CIP 106854 / NCIMB 13768 / 1H11).